Reading from the N-terminus, the 355-residue chain is UDP-N-acetylglucosamine--N-acetylmuramyl-(pentapeptide) pyrophosphoryl-undecaprenol N-acetylglucosamine transferase (355 aa).

UDP-N-acetyl-alpha-D-glucosamine contacts are provided by residues 15-17 (TGG), N127, R163, S191, I244, 263-268 (ALTVSE), and Q288.

Belongs to the glycosyltransferase 28 family. MurG subfamily.

It is found in the cell inner membrane. It carries out the reaction di-trans,octa-cis-undecaprenyl diphospho-N-acetyl-alpha-D-muramoyl-L-alanyl-D-glutamyl-meso-2,6-diaminopimeloyl-D-alanyl-D-alanine + UDP-N-acetyl-alpha-D-glucosamine = di-trans,octa-cis-undecaprenyl diphospho-[N-acetyl-alpha-D-glucosaminyl-(1-&gt;4)]-N-acetyl-alpha-D-muramoyl-L-alanyl-D-glutamyl-meso-2,6-diaminopimeloyl-D-alanyl-D-alanine + UDP + H(+). It participates in cell wall biogenesis; peptidoglycan biosynthesis. Cell wall formation. Catalyzes the transfer of a GlcNAc subunit on undecaprenyl-pyrophosphoryl-MurNAc-pentapeptide (lipid intermediate I) to form undecaprenyl-pyrophosphoryl-MurNAc-(pentapeptide)GlcNAc (lipid intermediate II). The protein is UDP-N-acetylglucosamine--N-acetylmuramyl-(pentapeptide) pyrophosphoryl-undecaprenol N-acetylglucosamine transferase of Escherichia coli O139:H28 (strain E24377A / ETEC).